The sequence spans 78 residues: Dermaseptin-B1 (78 aa).

The signal sequence occupies residues 1-22 (MDILKKSLFLVLFLGLVSLSIC). A propeptide spanning residues 23 to 42 (EEEKRENEDEEKQDDEQSEM) is cleaved from the precursor. At Gln75 the chain carries Glutamine amide. Positions 76-78 (GEQ) are excised as a propeptide.

This sequence belongs to the frog skin active peptide (FSAP) family. Dermaseptin subfamily. Expressed by the skin glands.

It is found in the secreted. Possesses a potent antimicrobial activity against bacteria, fungi and protozoa. Probably acts by disturbing membrane functions with its amphipathic structure. In Phyllomedusa bicolor (Two-colored leaf frog), this protein is Dermaseptin-B1.